The primary structure comprises 316 residues: MLKSNKVVLIGAGGVGSSFAYALTIDNSLVHELVIIDVNEDKAKGEVMDLNHGQMFLKKNINVLFGTYKDCVNADIVVITAGLNQKPGETRLDLVGKNSKIFKDIITNVVSSGFDGIFVIASNPVDIMTYVTMKYSKFPIHKVIGTGTILDTSRLRYFLSDRFNVNTQNIHSYVMGEHGDSSFVTWDETKIAMKPLSEYLSEGKITELELDEIHKKVVNAAYEVIKLKGATYYAIGLGIKNIVNAIIGDQNIILPISSYINGQYGGLIKDIYIGAPAIVCKEGVKEVLNFKISPKELEKFNNSANQLKSYIDKIEF.

Residues Val15, Asp37, Lys42, Tyr68, and 82-83 (GL) each bind NAD(+). Residues Gln85, Arg91, and 123–126 (NPVD) contribute to the substrate site. Residues 121-123 (ASN) and Thr146 contribute to the NAD(+) site. 151–154 (DTSR) serves as a coordination point for substrate. Beta-D-fructose 1,6-bisphosphate is bound by residues Arg156 and His171. The active-site Proton acceptor is the His178. Phosphotyrosine is present on Tyr222. Position 231 (Thr231) interacts with substrate.

This sequence belongs to the LDH/MDH superfamily. LDH family. Homotetramer.

The protein resides in the cytoplasm. It catalyses the reaction (S)-lactate + NAD(+) = pyruvate + NADH + H(+). Its pathway is fermentation; pyruvate fermentation to lactate; (S)-lactate from pyruvate: step 1/1. With respect to regulation, allosterically activated by fructose 1,6-bisphosphate (FBP). Its function is as follows. Catalyzes the conversion of lactate to pyruvate. The sequence is that of L-lactate dehydrogenase from Borreliella afzelii (strain PKo) (Borrelia afzelii).